Reading from the N-terminus, the 367-residue chain is Porin Omp2a (367 aa).

Residues 1-22 (MNIKSLLLGSAAALVAASGAQA) form the signal peptide.

This sequence belongs to the alphaproteobacteria porin family. As to quaternary structure, monomer.

Its subcellular location is the cell outer membrane. Forms passive diffusion pores that allow small molecular weight hydrophilic materials across the outer membrane. This is Porin Omp2a (omp2a) from Brucella canis (strain ATCC 23365 / NCTC 10854 / RM-666).